Consider the following 727-residue polypeptide: NADH-ubiquinone oxidoreductase 75 kDa subunit, mitochondrial (727 aa).

The N-terminal 23 residues, 1 to 23, are a transit peptide targeting the mitochondrion; that stretch reads MLRIPVRKALVGLSKSPKGCVRT. Residues 30-108 form the 2Fe-2S ferredoxin-type domain; sequence NLIEVFVDGQ…GWNILTNSEK (79 aa). [2Fe-2S] cluster-binding residues include Cys64, Cys75, and Cys78. Lys84 is subject to N6-acetyllysine. Cys92 contributes to the [2Fe-2S] cluster binding site. Residues 108–147 form the 4Fe-4S His(Cys)3-ligated-type domain; sequence KSKKAREGVMEFLLANHPLDCPICDQGGECDLQDQSMMFG. The [4Fe-4S] cluster site is built by His124, Cys128, Cys131, Cys137, Cys176, Cys179, Cys182, and Cys226. Positions 245–301 constitute a 4Fe-4S Mo/W bis-MGD-type domain; the sequence is TRKTESIDVMDAVGSNIVVSTRTGEVMRILPRMHEDINEXWISDKTRFAYDGLKRQR. Lys467, Lys499, and Lys709 each carry N6-acetyllysine.

This sequence belongs to the complex I 75 kDa subunit family. In terms of assembly, core subunit of respiratory chain NADH dehydrogenase (Complex I) which is composed of 45 different subunits. This is the largest subunit of complex I and it is a component of the iron-sulfur (IP) fragment of the enzyme. Complex I associates with ubiquinol-cytochrome reductase complex (Complex III) to form supercomplexes. Interacts with MDM2 and AKAP1. [2Fe-2S] cluster is required as a cofactor. The cofactor is [4Fe-4S] cluster.

Its subcellular location is the mitochondrion inner membrane. The catalysed reaction is a ubiquinone + NADH + 5 H(+)(in) = a ubiquinol + NAD(+) + 4 H(+)(out). Functionally, core subunit of the mitochondrial membrane respiratory chain NADH dehydrogenase (Complex I) which catalyzes electron transfer from NADH through the respiratory chain, using ubiquinone as an electron acceptor. Essential for catalysing the entry and efficient transfer of electrons within complex I. Plays a key role in the assembly and stability of complex I and participates in the association of complex I with ubiquinol-cytochrome reductase complex (Complex III) to form supercomplexes. This Gorilla gorilla gorilla (Western lowland gorilla) protein is NADH-ubiquinone oxidoreductase 75 kDa subunit, mitochondrial (NDUFS1).